Reading from the N-terminus, the 228-residue chain is UPF0173 metal-dependent hydrolase lmo1577 (228 aa).

This sequence belongs to the UPF0173 family.

This chain is UPF0173 metal-dependent hydrolase lmo1577, found in Listeria monocytogenes serovar 1/2a (strain ATCC BAA-679 / EGD-e).